The chain runs to 720 residues: Fatty acid CoA ligase Acsl3 (720 aa).

Residues 21-41 form a helical; Signal-anchor for type III membrane protein membrane-spanning segment; it reads ILLYFIHFLISLYTILTYIPF. Residues 42–720 are Cytoplasmic-facing; that stretch reads YFFSESRQEK…ADIERMYGRK (679 aa). Serine 683 is subject to Phosphoserine.

Belongs to the ATP-dependent AMP-binding enzyme family. Mg(2+) serves as cofactor.

It localises to the mitochondrion outer membrane. The protein localises to the peroxisome membrane. Its subcellular location is the microsome membrane. It is found in the endoplasmic reticulum membrane. It catalyses the reaction a long-chain fatty acid + ATP + CoA = a long-chain fatty acyl-CoA + AMP + diphosphate. It carries out the reaction (5Z,8Z,11Z,14Z)-eicosatetraenoate + ATP + CoA = (5Z,8Z,11Z,14Z)-eicosatetraenoyl-CoA + AMP + diphosphate. The enzyme catalyses (E)-hexadec-2-enoate + ATP + CoA = (2E)-hexadecenoyl-CoA + AMP + diphosphate. The catalysed reaction is 15-hydroxy-(5Z,8Z,11Z,13E)-eicosatetraenoate + ATP + CoA = 15-hydroxy-(5Z,8Z,11Z,13E)-eicosatetraenoyl-CoA + AMP + diphosphate. It catalyses the reaction 12-hydroxy-(5Z,8Z,10E,14Z)-eicosatetraenoate + ATP + CoA = 12-hydroxy-(5Z,8Z,10E,14Z)-eicosatetraenoyl-CoA + AMP + diphosphate. It carries out the reaction 5-hydroxy-(6E,8Z,11Z,14Z)-eicosatetraenoate + ATP + CoA = 5-hydroxy-(6E,8Z,11Z,14Z)-eicosatetraenoyl-CoA + AMP + diphosphate. The enzyme catalyses 14,15-epoxy-(5Z,8Z,11Z)-eicosatrienoate + ATP + CoA = 14,15-epoxy-(5Z,8Z,11Z)-eicosatrienoyl-CoA + AMP + diphosphate. The catalysed reaction is 11,12-epoxy-(5Z,8Z,14Z)-eicosatrienoate + ATP + CoA = 11,12-epoxy-(5Z,8Z,14Z)-eicosatrienoyl-CoA + AMP + diphosphate. It catalyses the reaction a medium-chain fatty acid + ATP + CoA = a medium-chain fatty acyl-CoA + AMP + diphosphate. It carries out the reaction hexadecanoate + ATP + CoA = hexadecanoyl-CoA + AMP + diphosphate. The enzyme catalyses tetradecanoate + ATP + CoA = tetradecanoyl-CoA + AMP + diphosphate. The catalysed reaction is dodecanoate + ATP + CoA = dodecanoyl-CoA + AMP + diphosphate. It catalyses the reaction octadecanoate + ATP + CoA = octadecanoyl-CoA + AMP + diphosphate. It carries out the reaction eicosanoate + ATP + CoA = eicosanoyl-CoA + AMP + diphosphate. The enzyme catalyses (9Z)-octadecenoate + ATP + CoA = (9Z)-octadecenoyl-CoA + AMP + diphosphate. The catalysed reaction is (9Z)-hexadecenoate + ATP + CoA = (9Z)-hexadecenoyl-CoA + AMP + diphosphate. It catalyses the reaction (9Z,12Z)-octadecadienoate + ATP + CoA = (9Z,12Z)-octadecadienoyl-CoA + AMP + diphosphate. It carries out the reaction (9Z,12Z,15Z)-octadecatrienoate + ATP + CoA = (9Z,12Z,15Z)-octadecatrienoyl-CoA + AMP + diphosphate. The enzyme catalyses (4Z,7Z,10Z,13Z,16Z,19Z)-docosahexaenoate + ATP + CoA = (4Z,7Z,10Z,13Z,16Z,19Z)-docosahexaenoyl-CoA + AMP + diphosphate. The catalysed reaction is (5Z,8Z,11Z,14Z,17Z)-eicosapentaenoate + ATP + CoA = (5Z,8Z,11Z,14Z,17Z)-eicosapentaenoyl-CoA + AMP + diphosphate. It catalyses the reaction a fatty acid + ATP + CoA = a fatty acyl-CoA + AMP + diphosphate. Acyl-CoA synthetases (ACSL) activates long-chain fatty acids for both synthesis of cellular lipids, and degradation via beta-oxidation. Required for the incorporation of fatty acids into phosphatidylcholine, the major phospholipid located on the surface of VLDL (very low density lipoproteins). Has mainly an anabolic role in energy metabolism. Mediates hepatic lipogenesis. Preferentially uses myristate, laurate, arachidonate and eicosapentaenoate as substrates. Both isoforms exhibit the same level of activity. The protein is Fatty acid CoA ligase Acsl3 of Homo sapiens (Human).